A 288-amino-acid polypeptide reads, in one-letter code: Pantothenate synthetase (288 aa).

Position 30–37 (Met-30–His-37) interacts with ATP. His-37 acts as the Proton donor in catalysis. (R)-pantoate is bound at residue Gln-61. Gln-61 is a beta-alanine binding site. Gly-147–Asp-150 provides a ligand contact to ATP. Gln-153 is a (R)-pantoate binding site. An ATP-binding site is contributed by Lys-184 to Arg-187.

It belongs to the pantothenate synthetase family. As to quaternary structure, homodimer.

It is found in the cytoplasm. The catalysed reaction is (R)-pantoate + beta-alanine + ATP = (R)-pantothenate + AMP + diphosphate + H(+). Its pathway is cofactor biosynthesis; (R)-pantothenate biosynthesis; (R)-pantothenate from (R)-pantoate and beta-alanine: step 1/1. Catalyzes the condensation of pantoate with beta-alanine in an ATP-dependent reaction via a pantoyl-adenylate intermediate. This chain is Pantothenate synthetase, found in Bacillus licheniformis (strain ATCC 14580 / DSM 13 / JCM 2505 / CCUG 7422 / NBRC 12200 / NCIMB 9375 / NCTC 10341 / NRRL NRS-1264 / Gibson 46).